Consider the following 136-residue polypeptide: Holo-[acyl-carrier-protein] synthase (136 aa).

2 residues coordinate Mg(2+): D8 and E57.

Belongs to the P-Pant transferase superfamily. AcpS family. Mg(2+) serves as cofactor.

It is found in the cytoplasm. The enzyme catalyses apo-[ACP] + CoA = holo-[ACP] + adenosine 3',5'-bisphosphate + H(+). In terms of biological role, transfers the 4'-phosphopantetheine moiety from coenzyme A to a Ser of acyl-carrier-protein. The chain is Holo-[acyl-carrier-protein] synthase from Azorhizobium caulinodans (strain ATCC 43989 / DSM 5975 / JCM 20966 / LMG 6465 / NBRC 14845 / NCIMB 13405 / ORS 571).